Here is a 379-residue protein sequence, read N- to C-terminus: Beta-1,3-N-acetylglucosaminyltransferase lunatic fringe (379 aa).

Topologically, residues 1-8 (MLKRCGRR) are cytoplasmic. The chain crosses the membrane as a helical; Signal-anchor for type II membrane protein span at residues 9–29 (LLLALAGALLACLLVLTADPP). The Lumenal portion of the chain corresponds to 30–379 (PPPLPAERGR…TPWCPRTAIF (350 aa)). Residues 86 to 107 (RDAGPPPGAAPRPADGHPRPLA) are disordered. R129 is a substrate binding site. An N-linked (GlcNAc...) asparagine glycan is attached at N167. 2 disulfides stabilise this stretch: C168–C179 and C197–C260. D201 lines the substrate pocket. D202 lines the Mn(2+) pocket. D290 is an active-site residue. Residue H314 participates in Mn(2+) binding. C364 and C373 are disulfide-bonded.

Belongs to the glycosyltransferase 31 family. Mn(2+) is required as a cofactor. The cofactor is Co(2+). A soluble form may be derived from the membrane form by proteolytic processing.

It localises to the golgi apparatus. It is found in the golgi apparatus membrane. It catalyses the reaction 3-O-(alpha-L-fucosyl)-L-threonyl-[EGF-like domain protein] + UDP-N-acetyl-alpha-D-glucosamine = 3-O-(N-acetyl-beta-D-glucosaminyl-(1-&gt;3)-alpha-L-fucosyl)-L-threonyl-[EGF-like domain protein] + UDP + H(+). It carries out the reaction 3-O-(alpha-L-fucosyl)-L-seryl-[EGF-like domain protein] + UDP-N-acetyl-alpha-D-glucosamine = 3-O-(N-acetyl-beta-D-glucosaminyl-(1-&gt;3)-alpha-L-fucosyl)-L-seryl-[EGF-like domain protein] + UDP + H(+). Glycosyltransferase that initiates the elongation of O-linked fucose residues attached to EGF-like repeats in the extracellular domain of Notch molecules. Modulates NOTCH1 activity by modifying O-fucose residues at specific EGF-like domains resulting in inhibition of NOTCH1 activation by JAG1 and enhancement of NOTCH1 activation by DLL1 via an increase in its binding to DLL1. Decreases the binding of JAG1 to NOTCH2 but not that of DLL1. Essential mediator of somite segmentation and patterning. This is Beta-1,3-N-acetylglucosaminyltransferase lunatic fringe from Homo sapiens (Human).